A 512-amino-acid polypeptide reads, in one-letter code: Cobyric acid synthase (512 aa).

One can recognise a GATase cobBQ-type domain in the interval 254–455 (EIDIAVVKLP…LHGLFDNKAL (202 aa)). Cysteine 335 serves as the catalytic Nucleophile. Residue histidine 447 is part of the active site.

The protein belongs to the CobB/CobQ family. CobQ subfamily.

It functions in the pathway cofactor biosynthesis; adenosylcobalamin biosynthesis. Catalyzes amidations at positions B, D, E, and G on adenosylcobyrinic A,C-diamide. NH(2) groups are provided by glutamine, and one molecule of ATP is hydrogenolyzed for each amidation. This chain is Cobyric acid synthase, found in Desulforamulus reducens (strain ATCC BAA-1160 / DSM 100696 / MI-1) (Desulfotomaculum reducens).